The primary structure comprises 279 residues: 32 kDa beta-galactoside-binding lectin (279 aa).

2 consecutive Galectin domains span residues 13-144 and 152-279; these read YRSV…VHWG and YESG…IQIQ. Position 213-219 (213-219) interacts with a beta-D-galactoside; sequence WGNEERE.

In terms of processing, the N-terminus is blocked.

Its function is as follows. Binds galactose. In Caenorhabditis elegans, this protein is 32 kDa beta-galactoside-binding lectin (lec-1).